The chain runs to 426 residues: Adenylosuccinate synthetase (426 aa).

Residues 18-24 and 46-48 contribute to the GTP site; these read GDEGKGK and GHT. The Proton acceptor role is filled by aspartate 19. Mg(2+) is bound by residues aspartate 19 and glycine 46. IMP-binding positions include 19–22, 44–47, threonine 136, arginine 150, glutamine 222, threonine 237, and arginine 301; these read DEGK and NAGH. Catalysis depends on histidine 47, which acts as the Proton donor. Substrate is bound at residue 297–303; it reads VTTKRKR. GTP-binding positions include arginine 303, 329–331, and 413–415; these read KID and GTG.

It belongs to the adenylosuccinate synthetase family. Homodimer. Requires Mg(2+) as cofactor.

It localises to the cytoplasm. The enzyme catalyses IMP + L-aspartate + GTP = N(6)-(1,2-dicarboxyethyl)-AMP + GDP + phosphate + 2 H(+). The protein operates within purine metabolism; AMP biosynthesis via de novo pathway; AMP from IMP: step 1/2. Plays an important role in the de novo pathway and in the salvage pathway of purine nucleotide biosynthesis. Catalyzes the first committed step in the biosynthesis of AMP from IMP. This is Adenylosuccinate synthetase from Schistosoma mansoni (Blood fluke).